The following is a 346-amino-acid chain: DNA-directed RNA polymerases I and III subunit RPAC1 (346 aa).

Alanine 2 carries the N-acetylalanine modification.

The protein belongs to the archaeal Rpo3/eukaryotic RPB3 RNA polymerase subunit family. Component of the RNA polymerase I and RNA polymerase III complexes consisting of at least 13 and 17 subunits, respectively. Pol I complex consists of a ten-subunit catalytic core composed of POLR1A/RPA1, POLR1B/RPA2, POLR1C/RPAC1, POLR1D/RPAC2, POLR1H/RPA12, POLR2E/RPABC1, POLR2F/RPABC2, POLR2H/RPABC3, POLR2K/RPABC4 and POLR2L/RPABC5; a mobile stalk subunit POLR1F/RPA43 protruding from the core and additional subunits homologous to general transcription factors POLR1E/RPA49 and POLR1G/RPA34. Part of Pol I pre-initiation complex (PIC), in which Pol I core assembles with RRN3 and promoter-bound UTBF and SL1/TIF-IB complex. Pol III complex consists of a ten-subunit catalytic core composed of POLR3A/RPC1, POLR3B/RPC2, POLR1C/RPAC1, POLR1D/RPAC2, POLR3K/RPC10, POLR2E/RPABC1, POLR2F/RPABC2, POLR2H/RPABC3, POLR2K/RPABC4 and POLR2L/RPABC5; a mobile stalk composed of two subunits POLR3H/RPC8 and CRCP/RPC9, protruding from the core and functioning primarily in transcription initiation; and additional subunits homologous to general transcription factors of the RNA polymerase II machinery, POLR3C/RPC3-POLR3F/RPC6-POLR3G/RPC7 heterotrimer required for transcription initiation and POLR3D/RPC4-POLR3E/RPC5 heterodimer involved in both transcription initiation and termination.

It is found in the nucleus. The protein localises to the cytoplasm. The protein resides in the cytosol. DNA-dependent RNA polymerase catalyzes the transcription of DNA into RNA using the four ribonucleoside triphosphates as substrates. Common component of RNA polymerases I and III which synthesize ribosomal RNA precursors and short non-coding RNAs including 5S rRNA, snRNAs, tRNAs and miRNAs, respectively. POLR1C/RPAC1 is part of the polymerase core and may function as a clamp element that moves to open and close the cleft. The polypeptide is DNA-directed RNA polymerases I and III subunit RPAC1 (Mus musculus (Mouse)).